We begin with the raw amino-acid sequence, 381 residues long: Succinyl-diaminopimelate desuccinylase (381 aa).

Histidine 69 serves as a coordination point for Zn(2+). Aspartate 71 is an active-site residue. Zn(2+) is bound at residue aspartate 103. Glutamate 137 serves as the catalytic Proton acceptor. Zn(2+) contacts are provided by glutamate 138, glutamate 166, and histidine 355.

Belongs to the peptidase M20A family. DapE subfamily. As to quaternary structure, homodimer. Zn(2+) is required as a cofactor. It depends on Co(2+) as a cofactor.

The enzyme catalyses N-succinyl-(2S,6S)-2,6-diaminopimelate + H2O = (2S,6S)-2,6-diaminopimelate + succinate. Its pathway is amino-acid biosynthesis; L-lysine biosynthesis via DAP pathway; LL-2,6-diaminopimelate from (S)-tetrahydrodipicolinate (succinylase route): step 3/3. In terms of biological role, catalyzes the hydrolysis of N-succinyl-L,L-diaminopimelic acid (SDAP), forming succinate and LL-2,6-diaminopimelate (DAP), an intermediate involved in the bacterial biosynthesis of lysine and meso-diaminopimelic acid, an essential component of bacterial cell walls. The chain is Succinyl-diaminopimelate desuccinylase from Rickettsia rickettsii (strain Iowa).